A 405-amino-acid chain; its full sequence is L-carnitine CoA-transferase (405 aa).

Positions 97 and 104 each coordinate CoA. D169 functions as the Nucleophile in the catalytic mechanism.

This sequence belongs to the CoA-transferase III family. CaiB subfamily. In terms of assembly, homodimer.

It localises to the cytoplasm. It carries out the reaction crotonobetainyl-CoA + (R)-carnitine = crotonobetaine + (R)-carnitinyl-CoA. It catalyses the reaction 4-(trimethylamino)butanoyl-CoA + (R)-carnitine = (R)-carnitinyl-CoA + 4-(trimethylamino)butanoate. It functions in the pathway amine and polyamine metabolism; carnitine metabolism. Catalyzes the reversible transfer of the CoA moiety from gamma-butyrobetainyl-CoA to L-carnitine to generate L-carnitinyl-CoA and gamma-butyrobetaine. Is also able to catalyze the reversible transfer of the CoA moiety from gamma-butyrobetainyl-CoA or L-carnitinyl-CoA to crotonobetaine to generate crotonobetainyl-CoA. This chain is L-carnitine CoA-transferase, found in Escherichia coli O7:K1 (strain IAI39 / ExPEC).